A 333-amino-acid chain; its full sequence is tRNA(Ile)-lysidine synthase (333 aa).

An ATP-binding site is contributed by 33–38; the sequence is SGGADS.

It belongs to the tRNA(Ile)-lysidine synthase family.

It localises to the cytoplasm. The enzyme catalyses cytidine(34) in tRNA(Ile2) + L-lysine + ATP = lysidine(34) in tRNA(Ile2) + AMP + diphosphate + H(+). Its function is as follows. Ligates lysine onto the cytidine present at position 34 of the AUA codon-specific tRNA(Ile) that contains the anticodon CAU, in an ATP-dependent manner. Cytidine is converted to lysidine, thus changing the amino acid specificity of the tRNA from methionine to isoleucine. The sequence is that of tRNA(Ile)-lysidine synthase from Salinispora tropica (strain ATCC BAA-916 / DSM 44818 / JCM 13857 / NBRC 105044 / CNB-440).